Reading from the N-terminus, the 274-residue chain is Caldesmon, smooth muscle (274 aa).

Disordered stretches follow at residues 1–102 (SNLK…FSPK) and 179–274 (KGNV…EKEP). 2 stretches are compositionally biased toward basic and acidic residues: residues 12–21 (GSEKLKEKQQ) and 28–95 (DELK…EKKP). The span at 182 to 194 (VFSSPGGTGTPNK) shows a compositional bias: polar residues. Composition is skewed to basic and acidic residues over residues 226–245 (SDLR…KQSV) and 260–274 (KKSE…EKEP).

The protein resides in the cytoplasm. The protein localises to the cytoskeleton. It localises to the myofibril. Its subcellular location is the stress fiber. Functionally, control of actomyosin interactions in smooth muscle and nonmuscle cells (could act as a bridge between myosin and actin filaments). Inhibits the actin-activated ATPase of myosin this inhibition is attenuated by calcium-calmodulin and is potentiated by tropomyosin. Interacts with actin, myosin, 2 molecules of tropomyosin and with calmodulin. In Meleagris gallopavo (Wild turkey), this protein is Caldesmon, smooth muscle (CALD1).